We begin with the raw amino-acid sequence, 474 residues long: Aspartic-type endopeptidase ctsD (474 aa).

The N-terminal stretch at 1 to 19 (MHLLQCLLSTISLASTVTA) is a signal peptide. Positions 106–413 (YFATVRVGSQ…DYDNHRIGFA (308 aa)) constitute a Peptidase A1 domain. Residue D124 is part of the active site. 4 N-linked (GlcNAc...) asparagine glycosylation sites follow: N189, N197, N275, and N301. D307 is an active-site residue. N-linked (GlcNAc...) asparagine glycosylation is found at N338, N344, and N414. The GPI-anchor amidated serine moiety is linked to residue S452. A propeptide spans 453–474 (ASIVSRFVHWPFIFALLCMVLV) (removed in mature form).

The protein belongs to the peptidase A1 family.

It localises to the cell membrane. In terms of biological role, secreted aspartic-type endopeptidase which is secreted and contributes to virulence. This Aspergillus fumigatus (strain ATCC MYA-4609 / CBS 101355 / FGSC A1100 / Af293) (Neosartorya fumigata) protein is Aspartic-type endopeptidase ctsD (ctsD).